A 670-amino-acid polypeptide reads, in one-letter code: DNA ligase (670 aa).

NAD(+)-binding positions include 34 to 38 (DAEYD), 83 to 84 (SL), and glutamate 112. The active-site N6-AMP-lysine intermediate is the lysine 114. Residues arginine 135, glutamate 169, lysine 285, and lysine 309 each coordinate NAD(+). Residues cysteine 403, cysteine 406, cysteine 421, and cysteine 426 each coordinate Zn(2+). Positions 589–670 (PASSVLAGKT…FLQEISREEQ (82 aa)) constitute a BRCT domain.

The protein belongs to the NAD-dependent DNA ligase family. LigA subfamily. It depends on Mg(2+) as a cofactor. Mn(2+) serves as cofactor.

The enzyme catalyses NAD(+) + (deoxyribonucleotide)n-3'-hydroxyl + 5'-phospho-(deoxyribonucleotide)m = (deoxyribonucleotide)n+m + AMP + beta-nicotinamide D-nucleotide.. Its function is as follows. DNA ligase that catalyzes the formation of phosphodiester linkages between 5'-phosphoryl and 3'-hydroxyl groups in double-stranded DNA using NAD as a coenzyme and as the energy source for the reaction. It is essential for DNA replication and repair of damaged DNA. The sequence is that of DNA ligase from Geobacillus thermodenitrificans (strain NG80-2).